The following is a 732-amino-acid chain: Elongation factor 2 (732 aa).

One can recognise a tr-type G domain in the interval 19-228 (ELVRNIGIVA…TKITFKDIVE (210 aa)). GTP-binding positions include 28–35 (AHIDHGKT), 94–98 (DTPGH), and 148–151 (NKID). His598 is subject to Diphthamide.

This sequence belongs to the TRAFAC class translation factor GTPase superfamily. Classic translation factor GTPase family. EF-G/EF-2 subfamily.

The protein resides in the cytoplasm. Its function is as follows. Catalyzes the GTP-dependent ribosomal translocation step during translation elongation. During this step, the ribosome changes from the pre-translocational (PRE) to the post-translocational (POST) state as the newly formed A-site-bound peptidyl-tRNA and P-site-bound deacylated tRNA move to the P and E sites, respectively. Catalyzes the coordinated movement of the two tRNA molecules, the mRNA and conformational changes in the ribosome. The sequence is that of Elongation factor 2 from Thermoplasma volcanium (strain ATCC 51530 / DSM 4299 / JCM 9571 / NBRC 15438 / GSS1).